The sequence spans 875 residues: MAASPEQFRGQARLPRCASPLSYDLRLRPDLAACAFSGSAAVAVAVSAPTRFLVLNAAELAVDGSSVRFQDLVPSEVVQFEEDEIVVIGFGQDLPIGEGVLKMDFTGTLNDQMRGFYRSKYEYKGESRNMAVTQFEAADARRCFPCWDEPAFKAKFKLTLEVPSELVALSNMPVIKETVHGPLKTVYYEESPLMSTYLVAIVVGLFDYIEGSTLEGTKVRVYTQVGKSNQGKFALDVAVKSLDLFKDYFATPYPLPKLDMVAIPDFAAGAMENYGLVTYRETALLYDELLSSASNKQQVAITVAHELAHQWFGNLVTMEWWTHLWLNEGFASWVSYLAVEALFPEWNNWTQFLDETTSGLRLDALAESHPIEVDINHASEIDAIFDSISYDKGASVIRMLQSYLGAERFQKALASYIKKYAYSNAKTEDLWAVLEEESGEPVKDLMTTWTKQQGYPVIYAKLDGHDLHLEQAQFLSDGSSGPGLWIVPITSCCGSYDAQKKFLLKGKTDKVHIDLTASQNAGGEKGENCWIKLNVDQTGFYRVKYDDELAAGLEKAIKANKLSLMDKIGIVEDSYSLSVARKQTLTSLLRLLNAYRNESDYTVLSHVTSVCLGIDKISVDATPELSRDIKQLLINLLLSAAKTLGWDPKEGESHLDVMLRSLLLIALVKLGHDETINEGVRRFHIFIKDRKTNILPPDTRKASYLAVMRTVTTSSRAGYDALLKIYRETAEAQEKSRILGSLSSCLDKDIVLEALNFMLTDEVRNQDAFYVLGGISLEGREVAWAWLKENWDHVLKTWPSSSLISDFVKSTVSRFTTEEKAAEVSEFFAGKTKPSFERALKQSLERVRISARWIESIRSEPNLAQTVNELLQHDM.

The required for membrane association stretch occupies residues 96–203 (IGEGVLKMDF…MSTYLVAIVV (108 aa)). Substrate-binding positions include glutamate 136 and 269-273 (GAMEN). Histidine 305 contributes to the Zn(2+) binding site. Glutamate 306 acts as the Proton acceptor in catalysis. Zn(2+) is bound by residues histidine 309 and glutamate 328. Positions 722–723 (LL) match the Dileucine internalization motif motif.

The protein belongs to the peptidase M1 family. As to quaternary structure, homodimer. The cofactor is Zn(2+).

The protein localises to the membrane. Its subcellular location is the microsome membrane. The protein resides in the cytoplasm. The catalysed reaction is Release of an N-terminal amino acid, Xaa-|-Yaa- from a peptide, amide or arylamide. Xaa is preferably Ala, but may be most amino acids including Pro (slow action). When a terminal hydrophobic residue is followed by a prolyl residue, the two may be released as an intact Xaa-Pro dipeptide.. In Oryza sativa subsp. japonica (Rice), this protein is Aminopeptidase M1-B.